The following is a 426-amino-acid chain: Serine--tRNA ligase (426 aa).

L-serine is bound at residue 233–235; the sequence is TAE. ATP is bound at residue 264–266; the sequence is RSE. Glu287 lines the L-serine pocket. ATP is bound at residue 351–354; sequence EISS. Ser387 contributes to the L-serine binding site.

The protein belongs to the class-II aminoacyl-tRNA synthetase family. Type-1 seryl-tRNA synthetase subfamily. In terms of assembly, homodimer. The tRNA molecule binds across the dimer.

The protein resides in the cytoplasm. It carries out the reaction tRNA(Ser) + L-serine + ATP = L-seryl-tRNA(Ser) + AMP + diphosphate + H(+). It catalyses the reaction tRNA(Sec) + L-serine + ATP = L-seryl-tRNA(Sec) + AMP + diphosphate + H(+). It participates in aminoacyl-tRNA biosynthesis; selenocysteinyl-tRNA(Sec) biosynthesis; L-seryl-tRNA(Sec) from L-serine and tRNA(Sec): step 1/1. Catalyzes the attachment of serine to tRNA(Ser). Is also able to aminoacylate tRNA(Sec) with serine, to form the misacylated tRNA L-seryl-tRNA(Sec), which will be further converted into selenocysteinyl-tRNA(Sec). The protein is Serine--tRNA ligase of Clostridium botulinum (strain Okra / Type B1).